The primary structure comprises 312 residues: Zinc import ATP-binding protein ZnuC (312 aa).

The ABC transporter domain occupies 13–228 (VSLEDVGVLR…PEYVRLFGSR (216 aa)). Residue 45–52 (GPNGSGKS) participates in ATP binding. Residues 241 to 312 (DHTHLPDGRV…HSRSGEGRHA (72 aa)) are disordered. The segment covering 243-312 (THLPDGRVLH…HSRSGEGRHA (70 aa)) has biased composition (basic and acidic residues).

It belongs to the ABC transporter superfamily. Zinc importer (TC 3.A.1.15.5) family. As to quaternary structure, the complex is composed of two ATP-binding proteins (ZnuC), two transmembrane proteins (ZnuB) and a solute-binding protein (ZnuA).

Its subcellular location is the cell inner membrane. It catalyses the reaction Zn(2+)(out) + ATP(in) + H2O(in) = Zn(2+)(in) + ADP(in) + phosphate(in) + H(+)(in). Part of the ABC transporter complex ZnuABC involved in zinc import. Responsible for energy coupling to the transport system. The chain is Zinc import ATP-binding protein ZnuC from Rhizobium etli (strain ATCC 51251 / DSM 11541 / JCM 21823 / NBRC 15573 / CFN 42).